Here is a 369-residue protein sequence, read N- to C-terminus: Glutamate 5-kinase (369 aa).

Lysine 14 is a binding site for ATP. 3 residues coordinate substrate: serine 54, aspartate 141, and asparagine 153. ATP-binding positions include 173-174 (SD) and 215-221 (TGGMVTK). The PUA domain maps to 277-355 (RGRLHLDPGA…SELATALGPA (79 aa)).

Belongs to the glutamate 5-kinase family.

It localises to the cytoplasm. It carries out the reaction L-glutamate + ATP = L-glutamyl 5-phosphate + ADP. The protein operates within amino-acid biosynthesis; L-proline biosynthesis; L-glutamate 5-semialdehyde from L-glutamate: step 1/2. Its function is as follows. Catalyzes the transfer of a phosphate group to glutamate to form L-glutamate 5-phosphate. In Salinispora arenicola (strain CNS-205), this protein is Glutamate 5-kinase.